A 376-amino-acid polypeptide reads, in one-letter code: Glutamate 5-kinase (376 aa).

K10 is an ATP binding site. Residues S50, D137, and N149 each contribute to the substrate site. ATP is bound at residue 169-170 (TD). The region spanning 275–353 (RGRLVLDAGA…AEIAGVLGFM (79 aa)) is the PUA domain.

The protein belongs to the glutamate 5-kinase family.

It localises to the cytoplasm. It catalyses the reaction L-glutamate + ATP = L-glutamyl 5-phosphate + ADP. It functions in the pathway amino-acid biosynthesis; L-proline biosynthesis; L-glutamate 5-semialdehyde from L-glutamate: step 1/2. Catalyzes the transfer of a phosphate group to glutamate to form L-glutamate 5-phosphate. This Alcanivorax borkumensis (strain ATCC 700651 / DSM 11573 / NCIMB 13689 / SK2) protein is Glutamate 5-kinase.